Reading from the N-terminus, the 226-residue chain is ATP synthase subunit a (226 aa).

The next 5 helical transmembrane spans lie at 17 to 37 (FNYLFHLILVAIIVLIVAKLA), 79 to 99 (LVATIGLIVLTSNVIGIIPGF), 105 to 125 (SLNLTLCLALSVFLYYNFEGI), 168 to 188 (FGNIKGDDLFLMVVLSLAPWV), and 200 to 222 (MALLQTFIFMILTYVYLAGAVVV).

Belongs to the ATPase A chain family. As to quaternary structure, F-type ATPases have 2 components, CF(1) - the catalytic core - and CF(0) - the membrane proton channel. CF(1) has five subunits: alpha(3), beta(3), gamma(1), delta(1), epsilon(1). CF(0) has three main subunits: a(1), b(2) and c(9-12). The alpha and beta chains form an alternating ring which encloses part of the gamma chain. CF(1) is attached to CF(0) by a central stalk formed by the gamma and epsilon chains, while a peripheral stalk is formed by the delta and b chains.

It localises to the cell inner membrane. In terms of biological role, key component of the proton channel; it plays a direct role in the translocation of protons across the membrane. This chain is ATP synthase subunit a, found in Campylobacter fetus subsp. fetus (strain 82-40).